The primary structure comprises 506 residues: 2-isopropylmalate synthase (506 aa).

The 262-residue stretch at 6–267 folds into the Pyruvate carboxyltransferase domain; the sequence is IIVFDTTLRD…YTDIVTKEIY (262 aa). 4 residues coordinate Mn(2+): aspartate 15, histidine 201, histidine 203, and asparagine 237. Residues 391 to 506 form a regulatory domain region; the sequence is SIQTLSTSSC…LNSYLSMKNR (116 aa).

The protein belongs to the alpha-IPM synthase/homocitrate synthase family. LeuA type 1 subfamily. As to quaternary structure, homodimer. Requires Mn(2+) as cofactor.

Its subcellular location is the cytoplasm. The enzyme catalyses 3-methyl-2-oxobutanoate + acetyl-CoA + H2O = (2S)-2-isopropylmalate + CoA + H(+). It functions in the pathway amino-acid biosynthesis; L-leucine biosynthesis; L-leucine from 3-methyl-2-oxobutanoate: step 1/4. Functionally, catalyzes the condensation of the acetyl group of acetyl-CoA with 3-methyl-2-oxobutanoate (2-ketoisovalerate) to form 3-carboxy-3-hydroxy-4-methylpentanoate (2-isopropylmalate). The polypeptide is 2-isopropylmalate synthase (Campylobacter fetus subsp. fetus (strain 82-40)).